Reading from the N-terminus, the 621-residue chain is Chaperone protein HtpG (621 aa).

An a; substrate-binding region spans residues 1–341 (MSNQEYTFQT…SEDLPLNVSR (341 aa)). The interval 342 to 547 (EILQQNKILA…GDEQNAMMAN (206 aa)) is b. Residues 548-621 (WMRQMGQSVP…RLNSVLLKAL (74 aa)) are c.

This sequence belongs to the heat shock protein 90 family. Homodimer.

The protein localises to the cytoplasm. Its function is as follows. Molecular chaperone. Has ATPase activity. The sequence is that of Chaperone protein HtpG from Helicobacter pylori (strain ATCC 700392 / 26695) (Campylobacter pylori).